Here is a 229-residue protein sequence, read N- to C-terminus: UPF0758 protein GSU0386 (229 aa).

The 123-residue stretch at 107–229 folds into the MPN domain; that stretch reads RFTSPEQVYN…FTSFVSAGLL (123 aa). Positions 178, 180, and 191 each coordinate Zn(2+). Residues 178–191 carry the JAMM motif motif; it reads HNHPTGDPAPSRED.

It belongs to the UPF0758 family.

The chain is UPF0758 protein GSU0386 from Geobacter sulfurreducens (strain ATCC 51573 / DSM 12127 / PCA).